Consider the following 159-residue polypeptide: Ribosomal RNA large subunit methyltransferase H (159 aa).

S-adenosyl-L-methionine-binding positions include Gly108 and 127 to 132 (FSKMTF).

The protein belongs to the RNA methyltransferase RlmH family. As to quaternary structure, homodimer.

The protein resides in the cytoplasm. The enzyme catalyses pseudouridine(1915) in 23S rRNA + S-adenosyl-L-methionine = N(3)-methylpseudouridine(1915) in 23S rRNA + S-adenosyl-L-homocysteine + H(+). Specifically methylates the pseudouridine at position 1915 (m3Psi1915) in 23S rRNA. The protein is Ribosomal RNA large subunit methyltransferase H of Clostridium acetobutylicum (strain ATCC 824 / DSM 792 / JCM 1419 / IAM 19013 / LMG 5710 / NBRC 13948 / NRRL B-527 / VKM B-1787 / 2291 / W).